Reading from the N-terminus, the 364-residue chain is N-alpha-acetyltransferase 30 (364 aa).

The span at 1-18 (MAEVPPGPSSLLPPPAPA) shows a compositional bias: pro residues. 3 disordered regions span residues 1-21 (MAEV…AAPA), 39-65 (SEDE…TSAK), and 110-164 (EAAA…SDPA). Ser-39 and Ser-54 each carry phosphoserine. The segment covering 39-48 (SEDEEDDEEH) has biased composition (acidic residues). The span at 126–135 (AEGHPGERPP) shows a compositional bias: basic and acidic residues. The span at 152-164 (AAAAAAGAASDPA) shows a compositional bias: low complexity. Phosphoserine is present on residues Ser-192, Ser-198, and Ser-201. The 149-residue stretch at 216-364 (RYVRYESELQ…DALRLKLWLR (149 aa)) folds into the N-acetyltransferase domain. Position 235 is an N6-acetyllysine (Lys-235).

Belongs to the acetyltransferase family. MAK3 subfamily. As to quaternary structure, component of the N-terminal acetyltransferase C (NatC) complex, which is composed of NAA35, NAA38 and NAA30.

It is found in the cytoplasm. The protein localises to the nucleus. The enzyme catalyses N-terminal L-methionyl-L-leucyl-[protein] + acetyl-CoA = N-terminal N(alpha)-acetyl-L-methionyl-L-leucyl-[protein] + CoA + H(+). It catalyses the reaction N-terminal L-methionyl-L-isoleucyl-[protein] + acetyl-CoA = N-terminal N(alpha)-acetyl-L-methionyl-L-isoleucyl-[protein] + CoA + H(+). The catalysed reaction is N-terminal L-methionyl-L-phenylalanyl-[protein] + acetyl-CoA = N-terminal N(alpha)-acetyl-L-methionyl-L-phenylalanyl-[protein] + CoA + H(+). It carries out the reaction N-terminal L-methionyl-L-tryptophyl-[protein] + acetyl-CoA = N-terminal N(alpha)-acetyl-L-methionyl-L-tryptophyl-[protein] + CoA + H(+). The enzyme catalyses N-terminal L-methionyl-L-tyrosyl-[protein] + acetyl-CoA = N-terminal N(alpha)-acetyl-L-methionyl-L-tyrosyl-[protein] + CoA + H(+). Functionally, catalytic subunit of the N-terminal acetyltransferase C (NatC) complex. Catalyzes acetylation of the N-terminal methionine residues of peptides beginning with Met-Leu-Ala and Met-Leu-Gly. N-terminal acetylation protects proteins from ubiquitination and degradation by the N-end rule pathway. Necessary for the lysosomal localization and function of ARL8B sugeesting that ARL8B is a NatC substrate. This is N-alpha-acetyltransferase 30 (Naa30) from Mus musculus (Mouse).